The primary structure comprises 298 residues: Calcium-binding protein 1 (298 aa).

Residues 1–10 are compositionally biased toward basic and acidic residues; sequence MSSHIAKSES. The interval 1–131 is disordered; sequence MSSHIAKSES…APAGTPEADP (131 aa). Ser-2 carries the N-myristoyl glycine lipid modification. His-4 carries the S-palmitoyl cysteine lipid modification. A compositionally biased stretch (low complexity) spans 11-25; it reads KTSLLKAAAASGGSR. EF-hand domains lie at 153–188, 207–224, 230–265, and 267–298; these read EEIEELREAFREFDKDKDGYINCRDLGNCMRTMGYM, GHVDFDDFVELMGPKLLA, IGVKELRDAFREFDTNGDGEISTSELREAMRKLLGH, and VGHRDIEEIIRDVDLNGDGRVDFEEFVRMMSR. The Ca(2+) site is built by Asp-166, Asp-168, Asp-170, Tyr-172, and Asp-177. Residues Asp-243, Asn-245, Asp-247, and Glu-249 each coordinate Ca(2+). Ser-251 is subject to Phosphoserine. Residues Glu-254, Asp-280, Asn-282, Asp-284, Arg-286, and Glu-291 each contribute to the Ca(2+) site.

As to quaternary structure, interacts with ITPR1, ITPR2 and ITPR3. The strength of this interaction inversely correlates with calcium concentration. Interacts with CACNA1A (via C-terminal CDB motif) in the pre- and postsynaptic membranes. Interacts with CACNA1C. Interacts with CACNA1D. Interacts (via EF-hands 1 and 2) at microtubules with MAP1LC3B. Interacts (via EF-hands 1 and 2) with NSMF (via the central NLS-containing motif region), the interaction occurs in a calcium dependent manner after synaptic NMDA receptor stimulation and prevents nuclear import of NSMF. Interacts with MYO1C and TRPC5. Interacts with SPACA9. Post-translationally, phosphorylated. The phosphorylation regulates the activity. Somatodendritic compartment of neurons. Restricted expression in retina to a subpopulation of amacrine, bipolar, and ganglion cells. According to PubMed:11906216, expression is heterogeneous within brain regions and their major cell types and does not match with those of marker proteins for characterized neuronal subpopulations. Isoform 2: Minor isoform expressed in the brain, in the granule cell layer of the cerebellum, at low level. Not developmentally regulated. Isoform 3: Minor isoform expressed in the brain, in the granule cell layer. of the cerebellum, at low level. Not developmentally regulated.

The protein localises to the cytoplasm. It localises to the cytoskeleton. In terms of biological role, modulates calcium-dependent activity of inositol 1,4,5-triphosphate receptors (ITPRs). Inhibits agonist-induced intracellular calcium signaling. Enhances inactivation and does not support calcium-dependent facilitation of voltage-dependent P/Q-type calcium channels. Causes calcium-dependent facilitation and inhibits inactivation of L-type calcium channels by binding to the same sites as calmodulin in the C-terminal domain of CACNA1C, but has an opposite effect on channel function. Suppresses the calcium-dependent inactivation of CACNA1D. Inhibits TRPC5 channels. Prevents NMDA receptor-induced cellular degeneration. Required for the normal transfer of light signals through the retina. The chain is Calcium-binding protein 1 (Cabp1) from Rattus norvegicus (Rat).